The sequence spans 401 residues: Glucose/mannose transporter GlcP (401 aa).

The next 12 membrane-spanning stretches (helical) occupy residues 11-31, 43-63, 78-98, 99-119, 132-152, 156-176, 212-232, 247-267, 278-298, 306-326, 336-356, and 360-380; these read AFFF…PFLL, VIIF…PLMI, IMLV…IIVM, AFLL…FVIA, EVLF…FIDI, FLPY…WLIF, LGFF…FANF, LISV…IGFV, LFSC…SNPI, LIGL…SIII, LFIA…GWSL, and TILL…GISV.

The protein belongs to the major facilitator superfamily.

It localises to the cell membrane. In terms of biological role, can transport glucose, mannose, 2-deoxyglucose and methyl alpha-glucoside, but not galactose. This chain is Glucose/mannose transporter GlcP (glcP), found in Bacillus subtilis (strain 168).